Consider the following 110-residue polypeptide: Cuticle protein 13 (110 aa).

In Limulus polyphemus (Atlantic horseshoe crab), this protein is Cuticle protein 13.